Consider the following 316-residue polypeptide: Transaldolase (316 aa).

Lysine 132 functions as the Schiff-base intermediate with substrate in the catalytic mechanism.

Belongs to the transaldolase family. Type 1 subfamily. As to quaternary structure, homodimer.

The protein localises to the cytoplasm. The enzyme catalyses D-sedoheptulose 7-phosphate + D-glyceraldehyde 3-phosphate = D-erythrose 4-phosphate + beta-D-fructose 6-phosphate. It participates in carbohydrate degradation; pentose phosphate pathway; D-glyceraldehyde 3-phosphate and beta-D-fructose 6-phosphate from D-ribose 5-phosphate and D-xylulose 5-phosphate (non-oxidative stage): step 2/3. Its function is as follows. Transaldolase is important for the balance of metabolites in the pentose-phosphate pathway. The polypeptide is Transaldolase (Aliivibrio fischeri (strain MJ11) (Vibrio fischeri)).